A 914-amino-acid chain; its full sequence is Chitin synthase B (914 aa).

2 disordered regions span residues Met1 to Tyr67 and Tyr112 to Leu140. Positions Gly130 to Leu140 are enriched in gly residues. 7 helical membrane-spanning segments follow: residues Trp543–Tyr562, Ile586–Val606, Ile627–Ala647, Ser662–Val682, Ala712–Met732, Leu843–Val863, and Ala882–Leu902.

It belongs to the chitin synthase family. Class III subfamily.

Its subcellular location is the cell membrane. It carries out the reaction [(1-&gt;4)-N-acetyl-beta-D-glucosaminyl](n) + UDP-N-acetyl-alpha-D-glucosamine = [(1-&gt;4)-N-acetyl-beta-D-glucosaminyl](n+1) + UDP + H(+). In terms of biological role, polymerizes chitin, a structural polymer of the cell wall and septum, by transferring the sugar moiety of UDP-GlcNAc to the non-reducing end of the growing chitin polymer. Plays an important role in septal growth or maintenance. Mediates colony spore formation. The sequence is that of Chitin synthase B from Aspergillus niger (strain ATCC MYA-4892 / CBS 513.88 / FGSC A1513).